The primary structure comprises 214 residues: Adenylate kinase (214 aa).

Residue 10-15 participates in ATP binding; it reads GAGKGT. The tract at residues 30–59 is NMP; the sequence is STGDMLRAAVKAGTELGKQAKEIMDAGKLV. AMP-binding positions include T31, R36, 57-59, 85-88, and Q92; these read KLV and GFPR. Residues 122-159 are LID; the sequence is GRRVHAASGRVYHVKFNPPKVEDKDDVTGEDLSVRKDD. Residues R123 and 132-133 each bind ATP; that span reads VY. R156 and R167 together coordinate AMP. R200 is a binding site for ATP.

This sequence belongs to the adenylate kinase family. In terms of assembly, monomer.

It localises to the cytoplasm. It catalyses the reaction AMP + ATP = 2 ADP. Its pathway is purine metabolism; AMP biosynthesis via salvage pathway; AMP from ADP: step 1/1. Its function is as follows. Catalyzes the reversible transfer of the terminal phosphate group between ATP and AMP. Plays an important role in cellular energy homeostasis and in adenine nucleotide metabolism. This chain is Adenylate kinase, found in Pectobacterium atrosepticum (strain SCRI 1043 / ATCC BAA-672) (Erwinia carotovora subsp. atroseptica).